The following is a 196-amino-acid chain: NAD(P)H-quinone oxidoreductase subunit I (196 aa).

4Fe-4S ferredoxin-type domains follow at residues 54–83 (GRIH…VDWV) and 94–123 (KHYS…VTEE). Residues cysteine 63, cysteine 66, cysteine 69, cysteine 73, cysteine 103, cysteine 106, cysteine 109, and cysteine 113 each contribute to the [4Fe-4S] cluster site. The segment at 174–196 (PAGAQRAGERPEAIANTAKSSEN) is disordered.

The protein belongs to the complex I 23 kDa subunit family. As to quaternary structure, NDH-1 is composed of at least 11 different subunits. Requires [4Fe-4S] cluster as cofactor.

It is found in the cellular thylakoid membrane. It carries out the reaction a plastoquinone + NADH + (n+1) H(+)(in) = a plastoquinol + NAD(+) + n H(+)(out). It catalyses the reaction a plastoquinone + NADPH + (n+1) H(+)(in) = a plastoquinol + NADP(+) + n H(+)(out). NDH-1 shuttles electrons from an unknown electron donor, via FMN and iron-sulfur (Fe-S) centers, to quinones in the respiratory and/or the photosynthetic chain. The immediate electron acceptor for the enzyme in this species is believed to be plastoquinone. Couples the redox reaction to proton translocation, and thus conserves the redox energy in a proton gradient. The sequence is that of NAD(P)H-quinone oxidoreductase subunit I from Thermosynechococcus vestitus (strain NIES-2133 / IAM M-273 / BP-1).